The primary structure comprises 527 residues: Mitochondrial substrate carrier family protein V (527 aa).

Over residues 1 to 14 (MNSSDFKKSFKEST) the composition is skewed to basic and acidic residues. A disordered region spans residues 1–29 (MNSSDFKKSFKESTENNSNTYRPSKTLNT). Topologically, residues 1 to 132 (MNSSDFKKSF…VSKKSISKEN (132 aa)) are mitochondrial intermembrane. The segment covering 15–29 (ENNSNTYRPSKTLNT) has biased composition (polar residues). Solcar repeat units lie at residues 130–220 (KENV…CKKH), 253–345 (MTVP…FKII), and 430–519 (VNMI…CKDL). Residues 133–153 (VNYLVSGSIAGAISRSATAGF) traverse the membrane as a helical segment. Over 154–187 (ERLTIIQQVQGMSQNLSQGYVGCIAAMKEMVKRE) the chain is Mitochondrial matrix. The chain crosses the membrane as a helical span at residues 188–208 (GFKSIWKGNGANIVKVSPNSG). Topologically, residues 209-258 (IRFLTYEFCKKHFLDNSSNHPSSSSIENGIDGNGVGCGSGSEMKMTVPQT) are mitochondrial intermembrane. Residues 259 to 279 (MFSGAMAGLTSTFFTYPLDVV) form a helical membrane-spanning segment. Residues 280-324 (RIRLSLQGSCSNDYAAHRYNGITHSFFKIHKDEGVKGLYKGLGTS) are Mitochondrial matrix-facing. A helical transmembrane segment spans residues 325 to 345 (IASIVPWVSISFATYEGFKII). The Mitochondrial intermembrane portion of the chain corresponds to 346–435 (CKKMILNYQI…LKKGVNMICD (90 aa)). The helical transmembrane segment at 436–456 (FVCGALSGAVTMTVCYPLDVL) threads the bilayer. At 457-487 (RRRMMIQGIGGNKVLYKNGWDATKKILSNEG) the chain is on the mitochondrial matrix side. The chain crosses the membrane as a helical span at residues 488-508 (LVAFYHGIIPAYFKVVPTVAI). The Mitochondrial intermembrane segment spans residues 509–527 (SFAVYEICKDLGSNKYQQK).

The protein belongs to the mitochondrial carrier (TC 2.A.29) family.

Its subcellular location is the mitochondrion inner membrane. In terms of biological role, mitochondrial solute carriers shuttle metabolites, nucleotides, and cofactors through the mitochondrial inner membrane. This is Mitochondrial substrate carrier family protein V (mcfV) from Dictyostelium discoideum (Social amoeba).